Consider the following 538-residue polypeptide: Potassium channel subfamily K member 10 (538 aa).

Residues 1 to 71 (MFFLYTDFFL…GLQTVMKWKT (71 aa)) are Cytoplasmic-facing. Residues 72–92 (VVAIFVVVVVYLVTGGLVFRA) form a helical membrane-spanning segment. N-linked (GlcNAc...) asparagine glycans are attached at residues Asn144, Asn147, and Asn148. The pore-forming intramembrane region spans 154–180 (LGSAFFFAGTVITTIGYGNIAPSTEGG). Positions 167, 168, 169, and 170 each coordinate K(+). The interval 167–172 (TIGYGN) is selectivity filter 1. A helical membrane pass occupies residues 182 to 202 (IFCILYAIFGIPLFGFLLAGI). The Cytoplasmic segment spans residues 203–233 (GDQLGTIFGKSIARVEKVFRKKQVSQTKIRV). Residues 234 to 254 (ISTILFILAGCIVFVTIPAVI) form a helical membrane-spanning segment. Residues 263-294 (ALESIYFVVVTLTTVGFGDFVAGGNAGINYRE) constitute an intramembrane region (pore-forming). Positions 276, 277, 278, and 279 each coordinate K(+). Residues 276 to 281 (TVGFGD) are selectivity filter 2. A helical transmembrane segment spans residues 299-319 (LVWFWILVGLAYFAAVLSMIG). The Cytoplasmic portion of the chain corresponds to 320–538 (DWLRVLSKKT…ENNSLLEDRN (219 aa)). Positions 412-421 (SQESINNRPN) are enriched in polar residues. Disordered stretches follow at residues 412 to 443 (SQES…EDNI) and 510 to 538 (QHAE…EDRN). A compositionally biased stretch (basic and acidic residues) spans 522-538 (DTKDREPENNSLLEDRN).

It belongs to the two pore domain potassium channel (TC 1.A.1.8) family. Homodimer; disulfide-linked. Forms heterodimers with other 2-pore domain K(+) channel subunits, such as KCNK2, KCNK4 and KCNK18. In terms of tissue distribution, abundantly expressed in pancreas and kidney and to a lower level in brain, testis, colon, and small intestine. In brain, mainly expressed in cerebellum, occipital lobe, putamen, and thalamus. No expression is detected in amygdala and spinal cord. Strongly expressed in kidney (primarily in the proximal tubule) and pancreas. As to expression, abundantly expressed in brain.

Its subcellular location is the cell membrane. The catalysed reaction is K(+)(in) = K(+)(out). It catalyses the reaction Rb(+)(in) = Rb(+)(out). The enzyme catalyses Cs(+)(in) = Cs(+)(out). Activated by various stimuli including acidic pH, anesthetics chloroform, halothane and isoflurane, mechanical stretch, lipids such as arachidonic, docosahexaenoic and linoleic polyunsaturated fatty acids and lysophosphatidylcholine and lysophosphatidylinositol lysophospholipids. Inhibited by norfluoxetine, the active metabolite of antidepressant fluoxetine (Prozac). Functionally, k(+) channel that conducts voltage-dependent outward rectifying currents upon membrane depolarization. Voltage sensing is coupled to K(+) electrochemical gradient in an 'ion flux gating' mode where outward but not inward ion flow opens the gate. Converts to voltage-independent 'leak' conductance mode upon stimulation by various stimuli including mechanical membrane stretch, acidic pH, heat and lipids. Homo- and heterodimerizes to form functional channels with distinct regulatory and gating properties. In trigeminal ganglia sensory neurons, the heterodimer of KCNK10/TREK-2 and KCNK18/TRESK inhibits neuronal firing and neurogenic inflammation by stabilizing the resting membrane potential at K(+) equilibrium potential as well as by regulating the threshold of action potentials and the spike frequency. Permeable to other monovalent ions such as Rb(+) and Cs(+). This is Potassium channel subfamily K member 10 from Homo sapiens (Human).